The sequence spans 235 residues: N,O-diacetylmuramidase (235 aa).

An N-terminal signal peptide occupies residues 1–17 (MKLSLLTVAAAAGAAVA). In terms of domain architecture, Ch-type lysozyme spans 29–235 (SVQGFDISGY…DQLQRFAKGG (207 aa)). Catalysis depends on residues Asp-34, Asp-122, and Glu-124. A disulfide bridge links Cys-132 with Cys-171.

Belongs to the glycosyl hydrolase 25 family.

It localises to the secreted. The enzyme catalyses Hydrolysis of (1-&gt;4)-beta-linkages between N-acetylmuramic acid and N-acetyl-D-glucosamine residues in a peptidoglycan and between N-acetyl-D-glucosamine residues in chitodextrins.. Its function is as follows. This enzyme has both lysozyme (acetylmuramidase) and diacetylmuramidase activities. This chain is N,O-diacetylmuramidase, found in Arthroderma benhamiae (strain ATCC MYA-4681 / CBS 112371) (Trichophyton mentagrophytes).